The following is a 45-amino-acid chain: Keratin-associated protein 22-2 (45 aa).

Belongs to the KRTAP type 20 family. Interacts with hair keratins.

In terms of biological role, in the hair cortex, hair keratin intermediate filaments are embedded in an interfilamentous matrix, consisting of hair keratin-associated proteins (KRTAP), which are essential for the formation of a rigid and resistant hair shaft through their extensive disulfide bond cross-linking with abundant cysteine residues of hair keratins. The matrix proteins include the high-sulfur and high-glycine-tyrosine keratins. This chain is Keratin-associated protein 22-2 (KRTAP22-2), found in Homo sapiens (Human).